The chain runs to 416 residues: Doublesex- and mab-3-related transcription factor A2 (416 aa).

The segment at residues 25-72 is a DNA-binding region (DM); sequence CARCRNHGVVSALKGHKRYCRWKDCMCAKCTLIAERQRVMAAQVALRR. Residues 131–154 are compositionally biased toward polar residues; that stretch reads FSKGQLSGPTTPQQAAGKSASAES. Positions 131 to 226 are disordered; it reads FSKGQLSGPT…PSPSSAASRH (96 aa). Residues 197–207 are compositionally biased toward low complexity; the sequence is GSVSSIGSDSG. In terms of domain architecture, DMA spans 227–262; it reads MNAIDILTRVFPSHKRSILELVLQGCGKDVVQAIEQ.

The protein belongs to the DMRT family.

It localises to the nucleus. Functionally, may be involved in sexual development. This Takifugu rubripes (Japanese pufferfish) protein is Doublesex- and mab-3-related transcription factor A2 (dmrta2).